A 1177-amino-acid polypeptide reads, in one-letter code: MTGQLVQYGRHRQRRSYARISEVLELPNLIEIQTSSYQWFLDEGLREMFQDISPIEDFTGNLSLEFIDYSLGEPKYSVDECKERDVTYAAPLRVKVRLINKETGEVKEQDVFMGDFPLMTETGTFVINGAERVIVSQLVRSPSVYYSGKVDKNGKRGFTATVIPNRGAWLEYETDAKDVVYVRIDRTRKLPVTVLLRALGFGSDQEITELLGDNEYLSNTLEKDNTDSTEKALLEIYERLRPGEPPTVENAKSLLVSRFFDPKRYDLANVGRYKINKKLHIKNRLFNQRLAETLVDPETGEILAAEGTILDRRTLDRILPYLEKNIGFKTAKPMGGVVEGDVELQSIKIYAPESEGERVINVIGNANITRDVKHITPGDILASISYFFNLLYKVGDTDDIDHLGNRRLRSVGELLQNQFRIGLSRMERVVRERMSIQDTNAITPQALINIRPVIAAIKEFFGSSQLSQFMDQTNPLAELTHKRRLSALGPGGLTRERAGFEVRDVHYSHYGRMCPIETPEGPNIGLINSLSSFAKVNEFGFIETPYRRVDPETGLVTGHVDYLTADEEDNYVVAQANMKLSEEGEFLDEDIVARFRGENIVTNKERIDYMDVSPKQVVSAATACIPFLENDDSNRALMGANMQRQAVPLMNPESPIVGTGMEYVSAKDSGAAVICKHPGIVERVEAREVWVRRYVEVDGQTVKGDLDRYKMQKFIRSNQGTCYNQRPIVSVGNEVVKGEILADGPSMELGELALGRNVLVGFMTWDGYNYEDAIIMSERLVKDDVYTSIHIEEYESEARDTKLGPEEITRDIPNVGEDALRNLDERGIIRVGAEVKDGDLLVGKVTPKGVTELTAEERLLHAIFGEKAREVRDTSLRVPHGGGGIILDVKVFNREDGDELPPGVNQLVRAYIVQKRKISEGDKMAGRHGNKGVISRILPEEDMPYLPDGTPIDIMLNPLGVPSRMNIGQVLELHLGMAARYLGIHIATPVFDGAREEDVWGTIEEAGMANDAKTILYDGRTGEPFDNRVSVGVMYMIKLAHMVDDKLHARSTGPYSLVTQQPLGGKAQFGGQRFGEMEVWALEAYGAAYTLQEILTVKSDDVIGRVKTYEAIVKGENVPEPGVPESFKVLIKELQSLGMDVKMMSSDDTEIEMRDTEDDDDHQSADKLNVEVETTKE.

Acidic residues predominate over residues 1147 to 1161; that stretch reads DDTEIEMRDTEDDDD. Residues 1147 to 1177 form a disordered region; that stretch reads DDTEIEMRDTEDDDDHQSADKLNVEVETTKE. Residues 1162–1177 are compositionally biased toward basic and acidic residues; sequence HQSADKLNVEVETTKE.

The protein belongs to the RNA polymerase beta chain family. In terms of assembly, the RNAP catalytic core consists of 2 alpha, 1 beta, 1 beta' and 1 omega subunit. When a sigma factor is associated with the core the holoenzyme is formed, which can initiate transcription.

It carries out the reaction RNA(n) + a ribonucleoside 5'-triphosphate = RNA(n+1) + diphosphate. DNA-dependent RNA polymerase catalyzes the transcription of DNA into RNA using the four ribonucleoside triphosphates as substrates. In Bacillus anthracis (strain A0248), this protein is DNA-directed RNA polymerase subunit beta.